Reading from the N-terminus, the 286-residue chain is 3-hydroxyanthranilate 3,4-dioxygenase (286 aa).

The segment at 1-160 (MERPVRVKAW…SEQYRTGKPN (160 aa)) is domain A (catalytic). Arg-43 is an O2 binding site. His-47, Glu-53, and His-91 together coordinate Fe cation. Residue Glu-53 coordinates substrate. Substrate is bound by residues Arg-95 and Glu-105. Residues 161-177 (PDQLLKEPPFPLSTRSV) are linker. Positions 178–286 (MEPMCLEAWL…QDPACKKSLG (109 aa)) are domain B.

This sequence belongs to the 3-HAO family. In terms of assembly, monomer. Fe(2+) serves as cofactor.

It is found in the cytoplasm. Its subcellular location is the cytosol. The enzyme catalyses 3-hydroxyanthranilate + O2 = (2Z,4Z)-2-amino-3-carboxymuconate 6-semialdehyde. The protein operates within cofactor biosynthesis; NAD(+) biosynthesis; quinolinate from L-kynurenine: step 3/3. Its function is as follows. Catalyzes the oxidative ring opening of 3-hydroxyanthranilate to 2-amino-3-carboxymuconate semialdehyde, which spontaneously cyclizes to quinolinate. This chain is 3-hydroxyanthranilate 3,4-dioxygenase, found in Bos taurus (Bovine).